Consider the following 157-residue polypeptide: Nicotinate dehydrogenase small FeS subunit (157 aa).

In terms of domain architecture, 2Fe-2S ferredoxin-type spans 4-80; sequence ITINLNLNGE…ESTIITLEGV (77 aa). [2Fe-2S] cluster is bound by residues cysteine 42, cysteine 47, cysteine 50, cysteine 62, cysteine 101, cysteine 104, cysteine 136, and cysteine 138.

As to quaternary structure, heterooctamer of NDHM, NDHL, NDHS and NDHF. Dimer of heterotetramers. Requires [2Fe-2S] cluster as cofactor.

It carries out the reaction nicotinate + NADP(+) + H2O = 6-hydroxynicotinate + NADPH + H(+). It functions in the pathway cofactor degradation; nicotinate degradation; 6-hydroxynicotinate from nicotinate: step 1/1. With respect to regulation, reversibly inactivated by selenide and sulfide. Not inhibited by cyanide. Its function is as follows. Catalyzes the hydroxylation of nicotinate to 6-hydroxynicotinate. Also active against 2-pyrazinecarboxylic acid, but inactive against other nicotinate analogs. This chain is Nicotinate dehydrogenase small FeS subunit (ndhS), found in Eubacterium barkeri (Clostridium barkeri).